We begin with the raw amino-acid sequence, 192 residues long: Archaemetzincin (192 aa).

Histidine 137 lines the Zn(2+) pocket. Catalysis depends on glutamate 138, which acts as the Proton acceptor. Zn(2+)-binding residues include histidine 141, histidine 147, cysteine 148, cysteine 153, cysteine 172, and cysteine 175.

It belongs to the peptidase M54 family. As to quaternary structure, monomer. Requires Zn(2+) as cofactor.

Functionally, probable zinc metalloprotease whose natural substrate is unknown. The sequence is that of Archaemetzincin from Pyrococcus furiosus (strain ATCC 43587 / DSM 3638 / JCM 8422 / Vc1).